The primary structure comprises 417 residues: Signal recognition particle receptor FtsY (417 aa).

Residues G228–T235, D310–R314, and T368–D371 each bind GTP.

The protein belongs to the GTP-binding SRP family. FtsY subfamily. Part of the signal recognition particle protein translocation system, which is composed of SRP and FtsY.

It is found in the cell membrane. The protein localises to the cytoplasm. The catalysed reaction is GTP + H2O = GDP + phosphate + H(+). Involved in targeting and insertion of nascent membrane proteins into the cytoplasmic membrane. Acts as a receptor for the complex formed by the signal recognition particle (SRP) and the ribosome-nascent chain (RNC). The sequence is that of Signal recognition particle receptor FtsY from Methanosarcina acetivorans (strain ATCC 35395 / DSM 2834 / JCM 12185 / C2A).